Consider the following 1408-residue polypeptide: ABC multidrug transporter MDR1 (1408 aa).

Polar residues predominate over residues 79–88 (IAASSDTLRN). A disordered region spans residues 79 to 102 (IAASSDTLRNSPLEKPISNAFSKS). Helical transmembrane passes span 147 to 167 (FAAPLEIIAMVLGLVLAVAAG) and 223 to 243 (LYLMAIGIGMFLATWLYMFIW). An ABC transmembrane type-1 1 domain is found at 157-464 (VLGLVLAVAA…LAPELAAVTK (308 aa)). An N-linked (GlcNAc...) asparagine glycan is attached at asparagine 244. A run of 4 helical transmembrane segments spans residues 296–316 (KVALVFQYAGTFVCGFVLAFV), 321–341 (LAGALVSILPVIMLCGGIMMT), 408–428 (IMFFVIYAAYALAFFYGGILV), and 436–456 (GIVINVFMSILIGSFSMAMLA). The region spanning 499 to 744 (ISFENVKFHY…ENGPYAQLVN (246 aa)) is the ABC transporter 1 domain. 534-541 (GASGSGKS) is a binding site for ATP. Residue asparagine 606 is glycosylated (N-linked (GlcNAc...) asparagine). The next 2 helical transmembrane spans lie at 838 to 858 (IIAFIAAICAGMVYPSLAILF) and 882 to 902 (LWYFITALAAAFVIFFQSAGF). The region spanning 838–1125 (IIAFIAAICA…VFTFVPDASK (288 aa)) is the ABC transmembrane type-1 2 domain. Asparagine 934 is a glycosylation site (N-linked (GlcNAc...) asparagine). 4 helical membrane passes run 952-972 (GLFGPTLGTVVQSCATLIGGC), 981-999 (LLALIGIACIPILVSGGYI), 1072-1092 (GLTFCIIALVFYIGALWIIDA), and 1099-1119 (FYTVLNSIVFASIQAGNVFTF). 2 N-linked (GlcNAc...) asparagine glycosylation sites follow: asparagine 1127 and asparagine 1182. The ABC transporter 2 domain maps to 1162-1402 (VRIEGVHFRY…KGGYYELVQM (241 aa)). 1197 to 1204 (GPSGCGKS) contributes to the ATP binding site. Asparagine 1404 is a glycosylation site (N-linked (GlcNAc...) asparagine).

This sequence belongs to the ABC transporter superfamily. ABCB family. Multidrug resistance exporter (TC 3.A.1.201) subfamily.

Its subcellular location is the cell membrane. The enzyme catalyses itraconazole(in) + ATP + H2O = itraconazole(out) + ADP + phosphate + H(+). It catalyses the reaction voriconazole(in) + ATP + H2O = voriconazole(out) + ADP + phosphate + H(+). The catalysed reaction is fluconazole(in) + ATP + H2O = fluconazole(out) + ADP + phosphate + H(+). Pleiotropic ABC efflux transporter that confers resistance to structurally and functionally unrelated compounds including azoles such as fluconazole (FLC), itraconazole (ITC), posaconazole (POS), and voriconazole (VRC). This chain is ABC multidrug transporter MDR1, found in Cryptococcus neoformans var. grubii serotype A (strain H99 / ATCC 208821 / CBS 10515 / FGSC 9487) (Filobasidiella neoformans var. grubii).